Reading from the N-terminus, the 242-residue chain is ATP-dependent dethiobiotin synthetase BioD (242 aa).

Residue 12-17 (EVGKTV) coordinates ATP. Thr16 lines the Mg(2+) pocket. Lys37 is an active-site residue. A substrate-binding site is contributed by Ser41. ATP is bound by residues Asp51 and 112–115 (EGAG). Mg(2+) contacts are provided by Asp51 and Glu112.

The protein belongs to the dethiobiotin synthetase family. Homodimer. Requires Mg(2+) as cofactor.

The protein resides in the cytoplasm. The enzyme catalyses (7R,8S)-7,8-diammoniononanoate + CO2 + ATP = (4R,5S)-dethiobiotin + ADP + phosphate + 3 H(+). Its pathway is cofactor biosynthesis; biotin biosynthesis; biotin from 7,8-diaminononanoate: step 1/2. Catalyzes a mechanistically unusual reaction, the ATP-dependent insertion of CO2 between the N7 and N8 nitrogen atoms of 7,8-diaminopelargonic acid (DAPA, also called 7,8-diammoniononanoate) to form a ureido ring. This Bacillus anthracis (strain A0248) protein is ATP-dependent dethiobiotin synthetase BioD.